We begin with the raw amino-acid sequence, 251 residues long: Hydroxyacylglutathione hydrolase GloB (251 aa).

Zn(2+) contacts are provided by His-53, His-55, Asp-57, His-58, His-110, and Asp-127. Substrate-binding positions include 136–138, 165–167, and 245–248; these read RLF, HEY, and RSKK. His-165 lines the Zn(2+) pocket.

The protein belongs to the metallo-beta-lactamase superfamily. Glyoxalase II family. In terms of assembly, monomer. Requires Zn(2+) as cofactor.

It catalyses the reaction an S-(2-hydroxyacyl)glutathione + H2O = a 2-hydroxy carboxylate + glutathione + H(+). It carries out the reaction (R)-S-lactoylglutathione + H2O = (R)-lactate + glutathione + H(+). It functions in the pathway secondary metabolite metabolism; methylglyoxal degradation; (R)-lactate from methylglyoxal: step 2/2. Its activity is regulated as follows. Is inhibited by Cu(2+). Type II glyoxalase that catalyzes the hydrolysis of (R)-S-lactoylglutathione to (R)-lactate and glutathione. Is more efficient than the isozyme GloC, and plays a major contribution to methylglyoxal (MG) detoxification in E.coli. The two isoenzymes have additive effects and ensure maximal MG degradation. The sequence is that of Hydroxyacylglutathione hydrolase GloB from Escherichia coli (strain K12).